We begin with the raw amino-acid sequence, 67 residues long: Probable Sec-independent protein translocase protein TatE (67 aa).

The chain crosses the membrane as a helical span at residues 4–21 (ISITKLLVVAALVVLLFG).

The protein belongs to the TatA/E family. TatE subfamily.

The protein localises to the cell inner membrane. Functionally, part of the twin-arginine translocation (Tat) system that transports large folded proteins containing a characteristic twin-arginine motif in their signal peptide across membranes. TatE shares overlapping functions with TatA. The protein is Probable Sec-independent protein translocase protein TatE of Salmonella arizonae (strain ATCC BAA-731 / CDC346-86 / RSK2980).